The chain runs to 184 residues: Photosystem I assembly protein Ycf4 (184 aa).

2 helical membrane passes run 22 to 42 (FCWA…GISS) and 57 to 77 (ILFF…LFIS).

This sequence belongs to the Ycf4 family.

It localises to the plastid. The protein localises to the chloroplast thylakoid membrane. Seems to be required for the assembly of the photosystem I complex. The chain is Photosystem I assembly protein Ycf4 from Illicium oligandrum (Star anise).